Here is a 247-residue protein sequence, read N- to C-terminus: 3(1)-hydroxy-L-isoleucine 4-dioxygenase (247 aa).

Fe cation is bound by residues His160, Asp162, and His213.

It belongs to the iron/ascorbate-dependent oxidoreductase family. L-ascorbate is required as a cofactor. The cofactor is Fe(2+).

The catalysed reaction is 3(1)-hydroxy-L-isoleucine + 2-oxoglutarate + O2 = (4S)-3(1),4-dihydroxy-L-isoleucine + succinate + CO2. In terms of biological role, catalyzes the hydroxylation of L-4'-hydroxyisoleucine (4'-HIL) at the C-4 position to form L-4,4'-dihydroxyisoleucine (4,4'-DIHIL). Together with HilA, catalyzes the two step conversion of L-isoleucine into L-4,4'-dihydroxyisoleucine. In vitro, in the absence of HilA, can also catalyze the oxidation of L-methionine and the C-4-hydroxylation of L-leucine and L-isoleucine. The polypeptide is 3(1)-hydroxy-L-isoleucine 4-dioxygenase (Pantoea ananatis (strain AJ13355)).